Reading from the N-terminus, the 1054-residue chain is DIS3-like exonuclease 1 (1054 aa).

A CSD1 domain is found at Ala236 to Glu313. The segment at Glu313–Gly332 is disordered. The CSD2 domain occupies Ile365–Asn431. The RNB domain maps to Arg465–Ser816. At Ser989 the chain carries Phosphoserine.

This sequence belongs to the RNR ribonuclease family. As to quaternary structure, component of the RNA exosome complex. The catalytically inactive RNA exosome core (Exo-9) complex is believed to associate with catalytic subunits EXOSC10, and DIS3 or DIS3L in cytoplasmic- and nuclear-specific RNA exosome complex forms. Mg(2+) is required as a cofactor.

Its subcellular location is the cytoplasm. It carries out the reaction Exonucleolytic cleavage in the 3'- to 5'-direction to yield nucleoside 5'-phosphates.. Its function is as follows. Catalytic component of the RNA exosome complex which has 3'-&gt;5' exoribonuclease activity and participates in a multitude of cellular RNA processing and degradation events. In the cytoplasm, the RNA exosome complex is involved in general mRNA turnover and specifically degrades inherently unstable mRNAs containing AU-rich elements (AREs) within their 3' untranslated regions, and in RNA surveillance pathways, preventing translation of aberrant mRNAs. It seems to be involved in degradation of histone mRNA. This chain is DIS3-like exonuclease 1 (Dis3l), found in Rattus norvegicus (Rat).